Reading from the N-terminus, the 241-residue chain is Small ribosomal subunit protein uS10m (241 aa).

The N-terminal 54 residues, 1–54, are a transit peptide targeting the mitochondrion; it reads MIAGVLRRSSLPSRQTLSAALASFNSCISHNLTPATTGASVSSRFTLASSPNSF.

This sequence belongs to the universal ribosomal protein uS10 family. Component of the mitochondrial ribosome small subunit.

The protein resides in the mitochondrion. The sequence is that of Small ribosomal subunit protein uS10m (RPS10) from Arabidopsis thaliana (Mouse-ear cress).